The following is a 65-amino-acid chain: UPF0434 protein RPB_0294 (65 aa).

It belongs to the UPF0434 family.

In Rhodopseudomonas palustris (strain HaA2), this protein is UPF0434 protein RPB_0294.